A 486-amino-acid chain; its full sequence is Protein nucleotidyltransferase YdiU (486 aa).

ATP is bound by residues G89, G91, R92, K112, D124, G125, R175, and R182. D251 serves as the catalytic Proton acceptor. Mg(2+) is bound by residues N252 and D261. D261 contributes to the ATP binding site.

The protein belongs to the SELO family. The cofactor is Mg(2+). Mn(2+) serves as cofactor.

It catalyses the reaction L-seryl-[protein] + ATP = 3-O-(5'-adenylyl)-L-seryl-[protein] + diphosphate. The catalysed reaction is L-threonyl-[protein] + ATP = 3-O-(5'-adenylyl)-L-threonyl-[protein] + diphosphate. It carries out the reaction L-tyrosyl-[protein] + ATP = O-(5'-adenylyl)-L-tyrosyl-[protein] + diphosphate. The enzyme catalyses L-histidyl-[protein] + UTP = N(tele)-(5'-uridylyl)-L-histidyl-[protein] + diphosphate. It catalyses the reaction L-seryl-[protein] + UTP = O-(5'-uridylyl)-L-seryl-[protein] + diphosphate. The catalysed reaction is L-tyrosyl-[protein] + UTP = O-(5'-uridylyl)-L-tyrosyl-[protein] + diphosphate. Nucleotidyltransferase involved in the post-translational modification of proteins. It can catalyze the addition of adenosine monophosphate (AMP) or uridine monophosphate (UMP) to a protein, resulting in modifications known as AMPylation and UMPylation. This chain is Protein nucleotidyltransferase YdiU, found in Shouchella clausii (strain KSM-K16) (Alkalihalobacillus clausii).